A 956-amino-acid chain; its full sequence is Endogenous retrovirus group K member 8 Pol protein (956 aa).

In terms of domain architecture, Reverse transcriptase spans 57 to 245; sequence LEKGHIEPSF…TPFHYLGMQI (189 aa). The short motif at 161 to 164 is the LPQG element; sequence LPQG. The short motif at 195–198 is the YXDD element; sequence YIDD. The region spanning 460–590 is the RNase H type-1 domain; that stretch reads LENALTVFTD…ADLLVSSALI (131 aa). 4 residues coordinate Mg(2+): Asp469, Glu497, Asp517, and Asp582. Residues 587–628 form an Integrase-type zinc finger; that stretch reads SALIKAQELHALTHVNAAGLKNKFDVTWKQAKDIVQHCTQCQ. 4 residues coordinate Zn(2+): His596, His600, Cys624, and Cys627. Positions 642–803 constitute an Integrase catalytic domain; the sequence is RGLCPNALWQ…TSAEQHLTGK (162 aa). Positions 811–859 form a DNA-binding region, integrase-type; it reads KLIWWKDNKNKTWEIGKVITWGRGFACVSPGENQLPVWIPTRHLKFYNE. Positions 864-890 are disordered; it reads AKKSTSAETETPQSSTVDSQDEQNGDV. The span at 869-881 shows a compositional bias: polar residues; it reads SAETETPQSSTVD.

It belongs to the beta type-B retroviral polymerase family. HERV class-II K(HML-2) pol subfamily.

The catalysed reaction is DNA(n) + a 2'-deoxyribonucleoside 5'-triphosphate = DNA(n+1) + diphosphate. It catalyses the reaction Endonucleolytic cleavage to 5'-phosphomonoester.. Early post-infection, the reverse transcriptase converts the viral RNA genome into double-stranded viral DNA. The RNase H domain of the reverse transcriptase performs two functions. It degrades the RNA template and specifically removes the RNA primer from the RNA/DNA hybrid. Following nuclear import, the integrase catalyzes the insertion of the linear, double-stranded viral DNA into the host cell chromosome. Endogenous Pol proteins may have kept, lost or modified their original function during evolution. The chain is Endogenous retrovirus group K member 8 Pol protein (ERVK-8) from Homo sapiens (Human).